A 468-amino-acid chain; its full sequence is RUS family member 1 (468 aa).

Position 2 is an N-acetylalanine (A2). Position 49 is a phosphothreonine (T49). The helical transmembrane segment at 247–267 (LLMLPLVSGCPGFSLGCFFFL) threads the bilayer.

Belongs to the RUS1 family.

Its subcellular location is the membrane. The sequence is that of RUS family member 1 from Homo sapiens (Human).